The chain runs to 160 residues: uncharacterized protein (160 aa).

Residues 5-160 (ISLSFYKPEH…GEQLILHHFL (156 aa)) enclose the N-acetyltransferase domain.

This is an uncharacterized protein from Bacillus subtilis (strain 168).